The primary structure comprises 272 residues: Phosphoglycolate phosphatase (272 aa).

Asp19 (nucleophile) is an active-site residue. Positions 19, 21, and 182 each coordinate Mg(2+).

The protein belongs to the HAD-like hydrolase superfamily. CbbY/CbbZ/Gph/YieH family. Mg(2+) serves as cofactor.

The enzyme catalyses 2-phosphoglycolate + H2O = glycolate + phosphate. It participates in organic acid metabolism; glycolate biosynthesis; glycolate from 2-phosphoglycolate: step 1/1. Its function is as follows. Specifically catalyzes the dephosphorylation of 2-phosphoglycolate. Is involved in the dissimilation of the intracellular 2-phosphoglycolate formed during the DNA repair of 3'-phosphoglycolate ends, a major class of DNA lesions induced by oxidative stress. This Pseudomonas putida (strain ATCC 47054 / DSM 6125 / CFBP 8728 / NCIMB 11950 / KT2440) protein is Phosphoglycolate phosphatase.